The chain runs to 224 residues: Transcription cofactor HES-6 (224 aa).

A disordered region spans residues 1 to 31; it reads MAPPAAPGRDRVGREDEDGWETRGDRKARKP. The span at 8-25 shows a compositional bias: basic and acidic residues; the sequence is GRDRVGREDEDGWETRGD. One can recognise a bHLH domain in the interval 25-77; the sequence is DRKARKPLVEKKRRARINESLQELRLLLAGAEVQAKLENAEVLELTVRRVQGV. Positions 96 to 129 constitute an Orange domain; sequence FAAGYIQCMHEVHTFVSTCQAIDATVAAELLNHL. The span at 147-161 shows a compositional bias: low complexity; that stretch reads DALAGPPRAPGRSGW. Residues 147-205 form a disordered region; it reads DALAGPPRAPGRSGWPAGGAPGSPIPSPPGPGDDLCSDLEEAPEAELSQAPAEGPDLVP. The span at 181–190 shows a compositional bias: acidic residues; it reads LCSDLEEAPE. Residues 221–224 carry the WRPW motif motif; the sequence is WRPW.

Transcription repression requires formation of a complex with a corepressor protein of the Groucho/TLE family. Interacts with HES1.

It localises to the nucleus. Its function is as follows. Does not bind DNA itself but suppresses both HES1-mediated N box-dependent transcriptional repression and binding of HES1 to E box sequences. Also suppresses HES1-mediated inhibition of the heterodimer formed by ASCL1/MASH1 and TCF3/E47, allowing ASCL1 and TCF3 to up-regulate transcription in its presence. Promotes cell differentiation. The polypeptide is Transcription cofactor HES-6 (Homo sapiens (Human)).